The primary structure comprises 305 residues: Putative lipid kinase USA300HOU_0749 (305 aa).

The DAGKc domain occupies 3 to 139; the sequence is NKYTHGVLFY…YDVIKINNQY (137 aa). ATP is bound by residues S44, 74–80, and T101; that span reads GDGTVNE. Mg(2+) contacts are provided by S220, D223, and E225. The active-site Proton acceptor is E281.

It belongs to the diacylglycerol/lipid kinase family. Requires Mg(2+) as cofactor.

May catalyze the ATP-dependent phosphorylation of lipids other than diacylglycerol (DAG). The chain is Putative lipid kinase USA300HOU_0749 from Staphylococcus aureus (strain USA300 / TCH1516).